Here is a 210-residue protein sequence, read N- to C-terminus: MSDFGINLDAICDNVKYKSSNSRTGSQVSNRSSRRMDFVDEEELSTYFNSKASVTQSDSCSNDLAVKTSIITEAVICDESEHVSADAIQEKEESIMQVDDNVMKWMMDSHDGISMNGGINFSRSKSKTGRSDFTESKSETSVSAHVSAGISSQLGMFNPIQNTVKKEAISEMFEDEDGDGCTCRNCPYREKYLKLRNKMKSVLVDMINEM.

A Mg(2+)-binding site is contributed by D86. Residues 119 to 141 (INFSRSKSKTGRSDFTESKSETS) are disordered. Residues 129 to 138 (GRSDFTESKS) are compositionally biased toward basic and acidic residues.

The protein belongs to the rotavirus NSP5 family. As to quaternary structure, homodimer. Interacts with VP1. Interacts with VP2. Interacts with NSP2 and NSP6. It depends on Mg(2+) as a cofactor. O-glycosylated.

It is found in the host cytoplasm. Its function is as follows. Plays an essential role in the viral genome replication. Participates, together with NSP2, in the formation of viral factories (viroplasms) which are large inclusions in the host cytoplasm where replication intermediates are assembled and viral RNA replication takes place. Orchestrates the recruitment of viroplasmic proteins such as capsid proteins to these factories. In Rotavirus C (strain RVC/Pig/United States/Cowden/1980) (RV-C), this protein is Non-structural protein 5.